The sequence spans 146 residues: D-aminoacyl-tRNA deacylase (146 aa).

The Gly-cisPro motif, important for rejection of L-amino acids motif lies at 137–138 (GP).

The protein belongs to the DTD family. As to quaternary structure, homodimer.

It localises to the cytoplasm. It catalyses the reaction glycyl-tRNA(Ala) + H2O = tRNA(Ala) + glycine + H(+). The enzyme catalyses a D-aminoacyl-tRNA + H2O = a tRNA + a D-alpha-amino acid + H(+). In terms of biological role, an aminoacyl-tRNA editing enzyme that deacylates mischarged D-aminoacyl-tRNAs. Also deacylates mischarged glycyl-tRNA(Ala), protecting cells against glycine mischarging by AlaRS. Acts via tRNA-based rather than protein-based catalysis; rejects L-amino acids rather than detecting D-amino acids in the active site. By recycling D-aminoacyl-tRNA to D-amino acids and free tRNA molecules, this enzyme counteracts the toxicity associated with the formation of D-aminoacyl-tRNA entities in vivo and helps enforce protein L-homochirality. The protein is D-aminoacyl-tRNA deacylase of Desulfatibacillum aliphaticivorans.